Consider the following 877-residue polypeptide: Phosphoenolpyruvate carboxylase (877 aa).

Catalysis depends on residues His-137 and Lys-544.

The protein belongs to the PEPCase type 1 family. Requires Mg(2+) as cofactor.

The catalysed reaction is oxaloacetate + phosphate = phosphoenolpyruvate + hydrogencarbonate. Forms oxaloacetate, a four-carbon dicarboxylic acid source for the tricarboxylic acid cycle. The polypeptide is Phosphoenolpyruvate carboxylase (Edwardsiella ictaluri (strain 93-146)).